A 3033-amino-acid chain; its full sequence is Genome polyprotein (3033 aa).

Ser2 is modified (N-acetylserine; by host). An interaction with STAT1 region spans residues 2–23 (STNPKPQRKTKRNTNRRPEDVK). An interaction with EIF2AK2/PKR region spans residues 2 to 58 (STNPKPQRKTKRNTNRRPEDVKFPGGGQIVGGVYLLPRRGPRLGVRTTRKTSERSQP). Residues 2-59 (STNPKPQRKTKRNTNRRPEDVKFPGGGQIVGGVYLLPRRGPRLGVRTTRKTSERSQPR) are interaction with DDX3X. Residues 2-75 (STNPKPQRKT…PKDRRSTGKA (74 aa)) are disordered. The Cytoplasmic segment spans residues 2–168 (STNPKPQRKT…EDGVNYATGN (167 aa)). Short sequence motifs (nuclear localization signal) lie at residues 5-13 (PKPQRKTKR) and 38-43 (PRRGPR). A compositionally biased stretch (basic residues) spans 7 to 16 (PQRKTKRNTN). Residues 32–47 (GGVYLLPRRGPRLGVR) are compositionally biased toward low complexity. A Phosphoserine; by host modification is found at Ser53. 2 short sequence motifs (nuclear localization signal) span residues 58-64 (PRGRRQP) and 66-71 (PKDRRS). Position 99 is a phosphoserine; by host (Ser99). The important for endoplasmic reticulum and mitochondrial localization stretch occupies residues 112-152 (PRHRSRNVGKVIDTLTCGFADLMGYIPVVGAPLSGAARAVA). Ser116 is modified (phosphoserine; by host PKA). Residues 122-173 (VIDTLTCGFADLMGYIPVVGAPLSGAARAVAHGVRVLEDGVNYATGNLPGFP) form an interaction with APOA2 region. The important for lipid droplets localization stretch occupies residues 164 to 167 (YATG). The helical transmembrane segment at 169-189 (LPGFPFSIFLLALLSCITVPV) threads the bilayer. The propeptide at 178–191 (LLALLSCITVPVSA) is ER anchor for the core protein, removed in mature form by host signal peptidase. Topologically, residues 190 to 358 (SAAQVKNTSS…SGAHWGVMFG (169 aa)) are lumenal. Asn196, Asn209, and Asn234 each carry an N-linked (GlcNAc...) asparagine; by host glycan. The tract at residues 265–296 (VVMSATFCSALYVGDLCGGVMLAAQVFIVSPQ) is important for fusion. N-linked (GlcNAc...) asparagine; by host glycosylation is present at Asn305. Residues 359–379 (LAYFSMQGAWAKVIVILLLAA) traverse the membrane as a helical segment. Over 380–729 (GVDAGTTTVG…WEWVVLLFLL (350 aa)) the chain is Lumenal. The segment at 385 to 411 (TTTVGGAVARSTNVIAGVFSHGPQQNI) is HVR1. Residues Asn417, Asn423, Asn430, and Asn448 are each glycosylated (N-linked (GlcNAc...) (high mannose) asparagine; by host). Cystine bridges form between Cys429/Cys554, Cys452/Cys459, Cys488/Cys496, and Cys505/Cys510. Residue Asn477 is glycosylated (N-linked (GlcNAc...) (high mannose) asparagine; by host). Residues 484–496 (MRPYCWHYPPKPC) form a CD81-binding 1 region. The interval 524-555 (RGVPTYTWGENETDVFLLNSTRPPQGSWFGCT) is CD81-binding 2. Asn534, Asn542, and Asn558 each carry an N-linked (GlcNAc...) (high mannose) asparagine; by host glycan. Cys566 and Cys571 are joined by a disulfide. Asn578 carries N-linked (GlcNAc...) (high mannose) asparagine; by host glycosylation. 3 disulfide bridges follow: Cys585–Cys589, Cys601–Cys624, and Cys611–Cys648. 2 N-linked (GlcNAc...) (high mannose) asparagine; by host glycosylation sites follow: Asn627 and Asn649. A disulfide bond links Cys656 and Cys681. Residues 664–675 (SQLSPLLHSTTE) are EIF2AK2/eIF2-alpha phosphorylation homology domain (PePHD). The chain crosses the membrane as a helical span at residues 730 to 750 (LADARVCACLWMLILLGQAEA). At 751–761 (ALEKLVVLHAA) the chain is on the lumenal side. Residues 762–782 (SAANCHGLLYFAIFFVAAWHI) form a helical membrane-spanning segment. At 783 to 785 (RGR) the chain is on the cytoplasmic side. The chain crosses the membrane as a helical span at residues 786–807 (VVPLTTYCLTGLWPFCLLLMAL). Residues 808-817 (PRQAYAYDAP) lie on the Lumenal side of the membrane. A helical membrane pass occupies residues 818 to 838 (VHGQIGVGLLILITLFTLTPG). Residues 839 to 842 (YKTL) are Cytoplasmic-facing. The chain crosses the membrane as a helical span at residues 843–863 (LGQCLWWLCYLLTLGEAMIQE). Over 864 to 885 (WVPPMQVRGGRDGIAWAVTIFC) the chain is Lumenal. The helical transmembrane segment at 886 to 906 (PGVVFDITKWLLALLGPAYLL) threads the bilayer. Positions 907 to 1030 (RAALTHVPYF…GYTSKGWKLL (124 aa)) constitute a Peptidase C18 domain. Residues 907–1661 (RAALTHVPYF…CMQADLEVMT (755 aa)) are Cytoplasmic-facing. The segment at 908–1210 (AALTHVPYFV…PVETLDVVTR (303 aa)) is protease NS2-3. Residue Cys926 is the site of S-palmitoyl cysteine; by host attachment. Residues 933 to 953 (AGGRYVQVALLALGRWTGTYI) are interaction with human SCPS1. Catalysis depends on for protease NS2 activity; shared with dimeric partner residues His956, Glu976, and Cys997. Residues 1031-1212 (APITAYAQQT…ETLDVVTRSP (182 aa)) enclose the Peptidase S29 domain. Residues His1087 and Asp1111 each act as charge relay system; for serine protease NS3 activity in the active site. 2 residues coordinate Zn(2+): Cys1127 and Cys1129. Residue Ser1169 is the Charge relay system; for serine protease NS3 activity of the active site. Zn(2+)-binding residues include Cys1175 and His1179. A Helicase ATP-binding domain is found at 1221–1373 (PAVPQTYQVG…PDIEEVGLGR (153 aa)). 1234-1241 (APTGSGKS) is a binding site for ATP. 2 residues coordinate Mg(2+): Ser1241 and Glu1321. Positions 1320–1323 (DECH) match the DECH box motif. Positions 1481–1501 (VPQDAVSRSQRRGRTGRGRQG) are disordered. The interval 1490–1501 (QRRGRTGRGRQG) is RNA-binding. Residues 1662–1682 (STWVLAGGVLAAVAAYCLATG) form a helical membrane-spanning segment. The NS3-binding stretch occupies residues 1683-1694 (CVSIIGRLHVNQ). At 1683 to 1809 (CVSIIGRLHV…ALTSPLSTST (127 aa)) the chain is on the cytoplasmic side. A helical membrane pass occupies residues 1810-1830 (TILLNIMGGWLASQIAPPAGA). Over 1831-1832 (TG) the chain is Lumenal. The chain crosses the membrane as a helical span at residues 1833–1853 (FVVSGLVGAAVGSIGLGKVLV). The glycine zipper stretch occupies residues 1837 to 1865 (GLVGAAVGSIGLGKVLVDILAGYGAGISG). A topological domain (cytoplasmic) is located at residue Asp1854. A helical transmembrane segment spans residues 1855–1875 (ILAGYGAGISGALVAFKIMSG). Residues 1876 to 1885 (EKPSMEDVIN) are Lumenal-facing. The chain crosses the membrane as a helical span at residues 1886–1906 (LLPGILSPGALVVGVICAAIL). At 1907 to 1976 (RRHVGPGEGA…WITEDCPIPC (70 aa)) the chain is on the cytoplasmic side. The S-palmitoyl cysteine; by host moiety is linked to residue Cys1972. Residue Cys1976 is the site of S-palmitoyl cysteine; by host; partial attachment. An intramembrane segment occupies 1977 to 2007 (SGSWLRDVWDWVCTILTDFKNWLTSKLFPKL). Positions 1982–2002 (RDVWDWVCTILTDFKNWLTSK) are membrane-binding. Topologically, residues 2008 to 3012 (PGLPFISCQK…FHSVSRARPR (1005 aa)) are cytoplasmic. The interval 2009–2225 (GLPFISCQKG…RATCTTHSNT (217 aa)) is D1; RNA-binding. Zn(2+)-binding residues include Cys2015, Cys2033, Cys2035, and Cys2056. At Tyr2069 the chain carries Phosphotyrosine; by host. The tract at residues 2124 to 2212 (EFFSWVDGVQ…ASSSVSQLSA (89 aa)) is FKBP8-binding. The segment at 2124–2332 (EFFSWVDGVQ…PTPPPRRRRT (209 aa)) is transcriptional activation. The interaction with non-structural protein 4A stretch occupies residues 2139–2143 (PTPKP). The tract at residues 2192–2213 (RRLARGSPPSEASSSVSQLSAP) is disordered. A compositionally biased stretch (low complexity) spans 2196 to 2213 (RGSPPSEASSSVSQLSAP). Ser2198 bears the Phosphoserine; by host; in p56 mark. Ser2201 carries the phosphoserine; by host; in p58 modification. Ser2205 is modified (phosphoserine; by host; in p56 and p58, regulates intracellular NS5A distribution). 3 positions are modified to phosphoserine; by host; in p58: Ser2208, Ser2211, and Ser2214. The ISDR stretch occupies residues 2210 to 2249 (LSAPSLRATCTTHSNTYDVDMVDANLLMEGGVAQTEPESR). The interaction with EIF2AK2/PKR stretch occupies residues 2214-2275 (SLRATCTTHS…LEPSIPSECM (62 aa)). Residues 2227 to 2315 (DVDMVDANLL…YQPPTVAGCA (89 aa)) form a D2 region. The tract at residues 2228 to 2315 (VDMVDANLLM…YQPPTVAGCA (88 aa)) is disordered. The interval 2249 to 2306 (RVPVLDFLEPMAEEESDLEPSIPSECMLPRSGFPRALPAWARPDYNPPLVESWRRPDY) is NS4B-binding. The tract at residues 2281-2297 (FPRALPAWARPDYNPPL) is interaction with human PPIA/CYPA. The span at 2316-2326 (LPPPKKAPTPP) shows a compositional bias: pro residues. Residues 2322-2325 (APTP) carry the SH3-binding motif. Thr2324 is modified (phosphothreonine; by host). The Nuclear localization signal signature appears at 2326–2334 (PPRRRRTVG). The interval 2329–2442 (RRRTVGLSES…SEEDDTTVCC (114 aa)) is D3. Residues 2336–2447 (SESTISEALQ…TTVCCSMSYS (112 aa)) form an interaction with host IFI27 region. Lys2350 is covalently cross-linked (Glycyl lysine isopeptide (Lys-Gly) (interchain with G-Cter in ubiquitin)). Residues 2352-2432 (FGQPPSSGDA…GSGSGSWSTC (81 aa)) form a disordered region. Low complexity predominate over residues 2355–2379 (PPSSGDAGSSTGAGAAESGGPTSPG). Residues 2358-2381 (SGDAGSSTGAGAAESGGPTSPGEP) are V3. An interaction with host VAPB region spans residues 2371–2439 (ESGGPTSPGE…STCSEEDDTT (69 aa)). Over residues 2398–2408 (EPGDPDLESDQ) the composition is skewed to acidic residues. Gly residues predominate over residues 2417 to 2426 (GGGVAPGSGS). Residues 2656 to 2774 (PMGFSYDTRC…ISESQGTEED (119 aa)) enclose the RdRp catalytic domain. Residues Asp2662, Asp2760, and Asp2761 each coordinate Mg(2+). The chain crosses the membrane as a helical span at residues 3013–3033 (SLLFGLLLLFVGVGLFLLPAR).

The protein belongs to the hepacivirus polyprotein family. In terms of assembly, homooligomer. Interacts with E1 (via C-terminus). Interacts with the non-structural protein 5A. Interacts (via N-terminus) with host STAT1 (via SH2 domain); this interaction results in decreased STAT1 phosphorylation and ubiquitin-mediated proteasome-dependent STAT1 degradation, leading to decreased IFN-stimulated gene transcription. Interacts with host STAT3; this interaction constitutively activates STAT3. Interacts with host LTBR receptor. Interacts with host TNFRSF1A receptor and possibly induces apoptosis. Interacts with host HNRPK. Interacts with host YWHAE. Interacts with host UBE3A/E6AP. Interacts with host DDX3X. Interacts with host APOA2. Interacts with host RXRA protein. Interacts with host SP110 isoform 3/Sp110b; this interaction sequesters the transcriptional corepressor SP110 away from the nucleus. Interacts with host CREB3 nuclear transcription protein; this interaction triggers cell transformation. Interacts with host ACY3. Interacts with host C1QR1. Interacts with host RBM24; this interaction, which enhances the interaction of the mature core protein with 5'-UTR, may inhibit viral translation and favor replication. Interacts (via N-terminus) with host EIF2AK2/PKR (via N-terminus); this interaction induces the autophosphorylation of EIF2AK2. Part of the viral assembly initiation complex composed of NS2, E1, E2, NS3, NS4A, NS5A and the mature core protein. Forms a heterodimer with envelope glycoprotein E2. Interacts with mature core protein. Interacts with protease NS2. The heterodimer E1/E2 interacts with host CLDN1; this interaction plays a role in viral entry into host cell. Interacts with host SPSB2 (via C-terminus). Part of the viral assembly initiation complex composed of NS2, E1, E2, NS3, NS4A, NS5A and the mature core protein. As to quaternary structure, forms a heterodimer with envelope glycoprotein E1. Interacts with host CD81 and SCARB1 receptors; these interactions play a role in viral entry into host cell. Interacts with host EIF2AK2/PKR; this interaction inhibits EIF2AK2 and probably allows the virus to evade the innate immune response. Interacts with host CD209/DC-SIGN and CLEC4M/DC-SIGNR. Interact with host SPCS1; this interaction is essential for viral particle assembly. Interacts with protease NS2. The heterodimer E1/E2 interacts with host CLDN1; this interaction plays a role in viral entry into host cell. Part of the viral assembly initiation complex composed of NS2, E1, E2, NS3, NS4A, NS5A and the mature core protein. Interacts with host SLC3A2/4F2hc; the interaction may facilitate viral entry into host cell. In terms of assembly, homohexamer. Homoheptamer. Interacts with protease NS2. Homodimer. Interacts with host SPCS1; this interaction is essential for viral particle assembly. Interacts with envelope glycoprotein E1. Interacts with envelope glycoprotein E2. Interacts with viroporin p7. Interacts with serine protease/helicase NS3. Part of the replication complex composed of NS2, NS3, NS4A, NS4B, NS5A and the RNA-directed RNA polymerase embedded in an ER-derived membranous web. Part of the viral assembly initiation complex composed of NS2, E1, E2, NS3, NS4A, NS5A and the mature core protein. Interacts with host NEURL3; this interaction prevents E1 binding to glycoprotein E2. As to quaternary structure, interacts with protease NS2. Interacts with non-structural protein 4A; this interaction stabilizes the folding of NS3 serine protease. NS3-NS4A interaction is essential for NS3 activation and allows membrane anchorage of the latter. NS3/NS4A complex also prevents phosphorylation of host IRF3, thus preventing the establishment of dsRNA induced antiviral state. Interacts with host MAVS; this interaction leads to the cleavage and inhibition of host MAVS. Interacts with host TICAM1; this interaction leads to the cleavage and inhibition of host TICAM1. Interacts with host TANK-binding kinase/TBK1; this interaction results in the inhibition of the association between TBK1 and IRF3, which leads to the inhibition of IRF3 activation. Interacts with host RBM24. Part of the replication complex composed of NS2, NS3, NS4A, NS4B, NS5A and the RNA-directed RNA polymerase embedded in an ER-derived membranous web. Part of the viral assembly initiation complex composed of NS2, E1, E2, NS3, NS4A, NS5A and the mature core protein. In terms of assembly, interacts with NS3 serine protease; this interaction stabilizes the folding of NS3 serine protease. NS3-NS4A interaction is essential for NS3 activation and allows membrane anchorage of the latter. Interacts with non-structural protein 5A (via N-terminus). Part of the replication complex composed of NS2, NS3, NS4A, NS4B, NS5A and the RNA-directed RNA polymerase embedded in an ER-derived membranous web. Part of the viral assembly initiation complex composed of NS2, E1, E2, NS3, NS4A, NS5A and the mature core protein. Homomultimer. Interacts with non-structural protein NS5A. Interacts with host PLA2G4C; this interaction likely initiates the recruitment of replication complexes to lipid droplets. Interacts with host STING; this interaction disrupts the interaction between STING and TBK1 thereby suppressing the interferon signaling. Part of the replication complex composed of NS2, NS3, NS4A, NS4B, NS5A and the RNA-directed RNA polymerase embedded in an ER-derived membranous web. As to quaternary structure, monomer. Homodimer; dimerization is required for RNA-binding. Interacts with the mature core protein. Interacts (via N-terminus) with non-structural protein 4A. Interacts with non-structural protein 4B. Interacts (via region D2) with RNA-directed RNA polymerase. Part of the viral assembly initiation complex composed of NS2, E1, E2, NS3, NS4A, NS5A and the mature core protein. Part of the replication complex composed of NS2, NS3, NS4A, NS4B, NS5A and the RNA-directed RNA polymerase embedded in an ER-derived membranous web. Interacts with host GRB2. Interacts with host BIN1. Interacts with host PIK3R1. Interacts with host SRCAP. Interacts with host FKBP8. Interacts (via C-terminus) with host VAPB (via MSP domain). Interacts with host EIF2AK2/PKR; this interaction leads to disruption of EIF2AK2 dimerization by NS5A and probably allows the virus to evade the innate immune response. Interacts (via N-terminus) with host PACSIN2 (via N-terminus); this interaction attenuates protein kinase C alpha-mediated phosphorylation of PACSIN2 by disrupting the interaction between PACSIN2 and PRKCA. Interacts (via N-terminus) with host SRC kinase (via SH2 domain). Interacts with most Src-family kinases. Interacts with host IFI27 and SKP2; promotes the ubiquitin-mediated proteasomal degradation of NS5A. Interacts with host GPS2. Interacts with host TNFRSF21; this interaction allows the modulation by the virus of JNK, p38 MAPK, STAT3, and Akt signaling pathways in a DR6-dependent manner. Interacts (via N-terminus) with host CIDEB (via N-terminus); this interaction seems to regulate the association of HCV particles with APOE. Interacts with host CHKA/Choline Kinase-alpha; CHKA bridges host PI4KA and NS5A and potentiates NS5A-stimulated PI4KA activity, which then facilitates the targeting of the ternary complex to the ER for viral replication. Interacts with host SPSB2 (via C-terminus); this interaction targets NS5A for ubiquitination and degradation. Interacts with host RAB18; this interaction may promote the association of NS5A and other replicase components with lipid droplets. Interacts (via region D2) with host PPIA/CYPA; the interaction stimulates RNA-binding ability of NS5A and is dependent on the peptidyl-prolyl cis-trans isomerase activity of PPIA/CYPA. Interacts with host TRIM14; this interaction induces the degradation of NS5A. In terms of assembly, homooligomer. Interacts with non-structural protein 5A. Interacts with host VAPB. Interacts with host PRK2/PKN2. Interacts with host HNRNPA1 and SEPT6; these interactions facilitate the viral replication. Part of the replication complex composed of NS2, NS3, NS4A, NS4B, NS5A and the RNA-directed RNA polymerase embedded in an ER-derived membranous web. It depends on Zn(2+) as a cofactor. The cofactor is Mg(2+). In terms of processing, specific enzymatic cleavages in vivo yield mature proteins. The structural proteins, core, E1, E2 and p7 are produced by proteolytic processing by host signal peptidases. The core protein is synthesized as a 23 kDa precursor which is retained in the ER membrane through the hydrophobic signal peptide. Cleavage by the signal peptidase releases the 21 kDa mature core protein. The cleavage of the core protein precursor occurs between aminoacids 176 and 188 but the exact cleavage site is not known. Some degraded forms of the core protein appear as well during the course of infection. The other proteins (p7, NS2, NS3, NS4A, NS4B, NS5A and NS5B) are cleaved by the viral proteases. Autoprocessing between NS2 and NS3 is mediated by the NS2 cysteine protease catalytic domain and regulated by the NS3 N-terminal domain. Post-translationally, phosphorylated by host PKC and PKA. Ubiquitinated; mediated by UBE3A and leading to core protein subsequent proteasomal degradation. In terms of processing, highly N-glycosylated. Post-translationally, palmitoylation is required for NS2/3 autoprocessing and E2 recruitment to membranes. Palmitoylated. This modification may play a role in its polymerization or in protein-protein interactions. In terms of processing, cleaved by host caspases which arec probably activated by the viral infection. Post-translationally, ubiquitinated. Ubiquitination, most probably at Lys-2350, mediated by host IFI27 and SKP2 leads to proteasomal degradation, restricting viral infection. Phosphorylated on serines in a basal form termed p56. p58 is a hyperphosphorylated form of p56. p56 and p58 coexist in the cell in roughly equivalent amounts. Hyperphosphorylation is dependent on the presence of NS4A. Host CSNK1A1/CKI-alpha, PI4KA or RPS6KB1 kinases may be responsible for NS5A phosphorylation. Phosphorylated NS5A is involved in viral replication. In terms of processing, tyrosine phosphorylation is essential for the interaction with host SRC. Post-translationally, the N-terminus is phosphorylated by host PRK2/PKN2.

Its subcellular location is the host endoplasmic reticulum membrane. It localises to the host mitochondrion membrane. The protein resides in the virion. The protein localises to the host cytoplasm. It is found in the host nucleus. Its subcellular location is the host lipid droplet. It localises to the virion membrane. The protein resides in the host mitochondrion. The protein localises to the host cell membrane. It is found in the host perinuclear region. The catalysed reaction is Hydrolysis of four peptide bonds in the viral precursor polyprotein, commonly with Asp or Glu in the P6 position, Cys or Thr in P1 and Ser or Ala in P1'.. The enzyme catalyses a ribonucleoside 5'-triphosphate + H2O = a ribonucleoside 5'-diphosphate + phosphate + H(+). It catalyses the reaction ATP + H2O = ADP + phosphate + H(+). It carries out the reaction RNA(n) + a ribonucleoside 5'-triphosphate = RNA(n+1) + diphosphate. Its activity is regulated as follows. Inhibited by the antiviral drug hexamethylene amiloride. Inhibition by amantadine appears to be genotype-dependent. Also inhibited by long-alkyl-chain iminosugar derivatives. Activity is up-regulated by PRK2/PKN2-mediated phosphorylation. Functionally, packages viral RNA to form a viral nucleocapsid, and promotes virion budding. Participates in the viral particle production as a result of its interaction with the non-structural protein 5A. Binds RNA and may function as a RNA chaperone to induce the RNA structural rearrangements taking place during virus replication. Modulates viral translation initiation by interacting with viral IRES and 40S ribosomal subunit. Affects various cell signaling pathways, host immunity and lipid metabolism. Prevents the establishment of cellular antiviral state by blocking the interferon-alpha/beta (IFN-alpha/beta) and IFN-gamma signaling pathways and by blocking the formation of phosphorylated STAT1 and promoting ubiquitin-mediated proteasome-dependent degradation of STAT1. Activates STAT3 leading to cellular transformation. Regulates the activity of cellular genes, including c-myc and c-fos. May repress the promoter of p53, and sequester CREB3 and SP110 isoform 3/Sp110b in the cytoplasm. Represses cell cycle negative regulating factor CDKN1A, thereby interrupting an important check point of normal cell cycle regulation. Targets transcription factors involved in the regulation of inflammatory responses and in the immune response: suppresses NF-kappa-B activation, and activates AP-1. Binds to dendritic cells (DCs) via C1QR1, resulting in down-regulation of T-lymphocytes proliferation. Alters lipid metabolism by interacting with hepatocellular proteins involved in lipid accumulation and storage. Induces up-regulation of FAS promoter activity, and thereby contributes to the increased triglyceride accumulation in hepatocytes (steatosis). In terms of biological role, forms a heterodimer with envelope glycoprotein E2, which mediates virus attachment to the host cell, virion internalization through clathrin-dependent endocytosis and fusion with host membrane. Fusion with the host cell is most likely mediated by both E1 and E2, through conformational rearrangements of the heterodimer required for fusion rather than a classical class II fusion mechanism. E1/E2 heterodimer binds host apolipoproteins such as APOB and APOE thereby forming a lipo-viro-particle (LVP). APOE associated to the LVP allows the initial virus attachment to cell surface receptors such as the heparan sulfate proteoglycans (HSPGs), syndecan-1 (SDC1), syndecan-1 (SDC2), the low-density lipoprotein receptor (LDLR) and scavenger receptor class B type I (SCARB1). The cholesterol transfer activity of SCARB1 allows E2 exposure and binding of E2 to SCARB1 and the tetraspanin CD81. E1/E2 heterodimer binding on CD81 activates the epithelial growth factor receptor (EGFR) signaling pathway. Diffusion of the complex E1-E2-EGFR-SCARB1-CD81 to the cell lateral membrane allows further interaction with Claudin 1 (CLDN1) and occludin (OCLN) to finally trigger HCV entry. Forms a heterodimer with envelope glycoprotein E1, which mediates virus attachment to the host cell, virion internalization through clathrin-dependent endocytosis and fusion with host membrane. Fusion with the host cell is most likely mediated by both E1 and E2, through conformational rearrangements of the heterodimer required for fusion rather than a classical class II fusion mechanism. The interaction between envelope glycoprotein E2 and host apolipoprotein E/APOE allows the proper assembly, maturation and infectivity of the viral particles. This interaction is probably promoted via the up-regulation of cellular autophagy by the virus. E1/E2 heterodimer binds host apolipoproteins such as APOB and APOE thereby forming a lipo-viro-particle (LVP). APOE associated to the LVP allows the initial virus attachment to cell surface receptors such as the heparan sulfate proteoglycans (HSPGs), syndecan-1 (SDC1), syndecan-1 (SDC2), the low-density lipoprotein receptor (LDLR) and scavenger receptor class B type I (SCARB1). The cholesterol transfer activity of SCARB1 allows E2 exposure and binding of E2 to SCARB1 and the tetraspanin CD81. E1/E2 heterodimer binding on CD81 activates the epithelial growth factor receptor (EGFR) signaling pathway. Diffusion of the complex E1-E2-EGFR-SCARB1-CD81 to the cell lateral membrane allows further interaction with Claudin 1 (CLDN1) and occludin (OCLN) to finally trigger HCV entry. Inhibits host EIF2AK2/PKR activation, preventing the establishment of an antiviral state. Viral ligand for CD209/DC-SIGN and CLEC4M/DC-SIGNR, which are respectively found on dendritic cells (DCs), and on liver sinusoidal endothelial cells and macrophage-like cells of lymph node sinuses. These interactions allow the capture of circulating HCV particles by these cells and subsequent facilitated transmission to permissive cells such as hepatocytes and lymphocyte subpopulations. The interaction between E2 and host amino acid transporter complex formed by SLC3A2 and SLC7A5/LAT1 may facilitate viral entry into host cell. Its function is as follows. Ion channel protein that acts as a viroporin and plays an essential role in the assembly, envelopment and secretion of viral particles. Regulates the host cell secretory pathway, which induces the intracellular retention of viral glycoproteins and favors assembly of viral particles. Creates a pore in acidic organelles and releases Ca(2+) and H(+) in the cytoplasm of infected cells, leading to a productive viral infection. High levels of cytoplasmic Ca(2+) may trigger membrane trafficking and transport of viral ER-associated proteins to viroplasms, sites of viral genome replication. This ionic imbalance induces the assembly of the inflammasome complex, which triggers the maturation of pro-IL-1beta into IL-1beta through the action of caspase-1. Targets also host mitochondria and induces mitochondrial depolarization. In addition of its role as a viroporin, acts as a lipid raft adhesion factor. Functionally, cysteine protease required for the proteolytic auto-cleavage between the non-structural proteins NS2 and NS3. The N-terminus of NS3 is required for the function of NS2 protease (active region NS2-3). Promotes the initiation of viral particle assembly by mediating the interaction between structural and non-structural proteins. In terms of biological role, displays three enzymatic activities: serine protease with a chymotrypsin-like fold, NTPase and RNA helicase. NS3 serine protease, in association with NS4A, is responsible for the cleavages of NS3-NS4A, NS4A-NS4B, NS4B-NS5A and NS5A-NS5B. The NS3/NS4A complex prevents phosphorylation of host IRF3, thus preventing the establishment of dsRNA induced antiviral state. The NS3/NS4A complex induces host amino acid transporter component SLC3A2, thus contributing to HCV propagation. NS3 RNA helicase binds to RNA and unwinds both dsDNA and dsRNA in the 3' to 5' direction, and likely resolves RNA complicated stable secondary structures in the template strand. Binds a single ATP and catalyzes the unzipping of a single base pair of dsRNA. Inhibits host antiviral proteins TBK1 and IRF3 thereby preventing the establishment of an antiviral state. Cleaves host MAVS/CARDIF thereby preventing the establishment of an antiviral state. Cleaves host TICAM1/TRIF, thereby disrupting TLR3 signaling and preventing the establishment of an antiviral state. Peptide cofactor which forms a non-covalent complex with the N-terminal of NS3 serine protease. The NS3/NS4A complex prevents phosphorylation of host IRF3, thus preventing the establishment of dsRNA induced antiviral state. The NS3/NS4A complex induces host amino acid transporter component SLC3A2, thus contributing to HCV propagation. Its function is as follows. Induces a specific membrane alteration that serves as a scaffold for the virus replication complex. This membrane alteration gives rise to the so-called ER-derived membranous web that contains the replication complex. NS4B self-interaction contributes to its function in membranous web formation. Promotes host TRIF protein degradation in a CASP8-dependent manner thereby inhibiting host TLR3-mediated interferon signaling. Disrupts the interaction between STING and TBK1 contributing to the inhibition of interferon signaling. Functionally, phosphorylated protein that is indispensable for viral replication and assembly. Both hypo- and hyperphosphorylated states are required for the viral life cycle. The hyperphosphorylated form of NS5A is an inhibitor of viral replication. Involved in RNA-binding and especially in binding to the viral genome. Zinc is essential for RNA-binding. Participates in the viral particle production as a result of its interaction with the viral mature core protein. Its interaction with host VAPB may target the viral replication complex to vesicles. Down-regulates viral IRES translation initiation. Mediates interferon resistance, presumably by interacting with and inhibiting host EIF2AK2/PKR. Prevents BIN1-induced apoptosis. Acts as a transcriptional activator of some host genes important for viral replication when localized in the nucleus. Via the interaction with host PACSIN2, modulates lipid droplet formation in order to promote virion assembly. Modulates TNFRSF21/DR6 signaling pathway for viral propagation. In terms of biological role, RNA-dependent RNA polymerase that performs primer-template recognition and RNA synthesis during viral replication. Initiates RNA transcription/replication at a flavin adenine dinucleotide (FAD), resulting in a 5'- FAD cap on viral RNAs. In this way, recognition of viral 5' RNA by host pattern recognition receptors can be bypassed, thereby evading activation of antiviral pathways. The protein is Genome polyprotein of Homo sapiens (Human).